The sequence spans 352 residues: Vacuolar protein sorting-associated protein 37C (352 aa).

Ser29 carries the phosphoserine modification. Residues 78–167 (VERCQEQKAK…RRPRALPELA (90 aa)) enclose the VPS37 C-terminal domain. Residues 162-352 (ALPELAGDVP…HPPGPAWPRY (191 aa)) are disordered. Pro residues-rich tracts occupy residues 173–185 (KRPPPPRPVPQAT), 202–213 (YPLPYSPSPGLP), and 319–336 (PGQPQPPVPPQPPYPPGT).

This sequence belongs to the VPS37 family. Component of the ESCRT-I complex (endosomal sorting complex required for transport I) which consists of TSG101, VPS28, a VPS37 protein (VPS37A to -D) and MVB12A or MVB12B in a 1:1:1:1 stoichiometry. Interacts with TSG101, VPS28, MVB12A and MVB12B. Component of the ESCRT-I complex (endosomal sorting complex required for transport I) which consists of TSG101, VPS28, a VPS37 protein (VPS37A to -D) and UBAP1 in a 1:1:1:1 stoichiometry. Interacts with HGS and STAM2. Interacts with CEP55. Phosphorylated by TBK1.

The protein localises to the late endosome membrane. Its function is as follows. Component of the ESCRT-I complex, a regulator of vesicular trafficking process. Required for the sorting of endocytic ubiquitinated cargos into multivesicular bodies. May be involved in cell growth and differentiation. This is Vacuolar protein sorting-associated protein 37C (Vps37c) from Mus musculus (Mouse).